Reading from the N-terminus, the 208-residue chain is Putative vomeronasal receptor-like protein 4 (208 aa).

The Extracellular segment spans residues 1-19; the sequence is MEMTKLFSYIVIKNVYYPQ. The helical transmembrane segment at 20 to 40 threads the bilayer; it reads VSFGISANTFLLLFHIFTFAY. The Cytoplasmic portion of the chain corresponds to 41 to 48; the sequence is THRLKPID. Residues 49-69 form a helical membrane-spanning segment; the sequence is MTISHLPLIHILLLFTQAILV. Topologically, residues 70–97 are extracellular; sequence SSDLFESWNIQNNDLKCKIITFLNRVMR. A disulfide bridge connects residues Cys86 and Cys173. A helical transmembrane segment spans residues 98 to 118; it reads GVSICTTCLLSVLQAITISPS. Residues 119-135 lie on the Cytoplasmic side of the membrane; it reads TSFLEKFKHISANHTLG. The helical transmembrane segment at 136 to 156 threads the bilayer; sequence FILFSWVLNMFITNNLLLFIV. The Extracellular portion of the chain corresponds to 157–183; it reads PTPNRIGASLLFVTEHCYVLPMSYTHR. The chain crosses the membrane as a helical span at residues 184-204; it reads SLFFILMVLRDVIFIGLMVLS. Residues 205–208 are Cytoplasmic-facing; sequence SGYG.

This sequence belongs to the G-protein coupled receptor 1 family. As to expression, expressed in olfactory nerve.

It localises to the cell membrane. Its function is as follows. Putative pheromone receptor. This is Putative vomeronasal receptor-like protein 4 (VN1R17P) from Homo sapiens (Human).